The primary structure comprises 64 residues: Large ribosomal subunit protein uL29 (64 aa).

It belongs to the universal ribosomal protein uL29 family.

The chain is Large ribosomal subunit protein uL29 from Ralstonia pickettii (strain 12J).